The chain runs to 471 residues: Tryptophan--tRNA ligase, cytoplasmic (471 aa).

Positions 8 to 64 constitute a WHEP-TRS domain; the sequence is SLLELFNSIATQGELVRSLKAGNASKDEIDSAVKMLVSLKMSYKAAAGEDYKADCPP. The tract at residues 59–79 is disordered; sequence KADCPPGNPAPTSNHGPDATE. An N6-succinyllysine modification is found at Lys154. The 'HIGH' region motif lies at 164-173; the sequence is PSSEAMHVGH. A 'KMSKS' region motif is present at residues 349–353; sequence KMSAS. The residue at position 351 (Ser351) is a Phosphoserine.

This sequence belongs to the class-I aminoacyl-tRNA synthetase family. As to quaternary structure, homodimer. Interacts with an oxidized form of GAPDH. GAPDH stimulates the aminoacylation activity of isoform 2. In terms of processing, proteolytic cleavage generates 2 forms; T1-TrpRS and T2-TrpRS.

It is found in the cytoplasm. The enzyme catalyses tRNA(Trp) + L-tryptophan + ATP = L-tryptophyl-tRNA(Trp) + AMP + diphosphate + H(+). Functionally, catalyzes the attachment of tryptophan to tRNA(Trp) in a two-step reaction: tryptophan is first activated by ATP to form Trp-AMP and then transferred to the acceptor end of the tRNA(Trp). Its function is as follows. Has no angiostatic activity. In terms of biological role, possesses an angiostatic activity but has no aminoacylation activity. Inhibits fluid shear stress-activated responses of endothelial cells. Regulates ERK, Akt, and eNOS activation pathways that are associated with angiogenesis, cytoskeletal reorganization and shear stress-responsive gene expression. Has an angiostatic activity. The protein is Tryptophan--tRNA ligase, cytoplasmic of Homo sapiens (Human).